Here is a 362-residue protein sequence, read N- to C-terminus: Protein RAFTIN 1B (362 aa).

Positions 1–20 are cleaved as a signal peptide; that stretch reads MARFLVALLAATLVAVQAGG. Residues 58–94 are disordered; sequence STSFVRDPEDRPPFDYRDYSRSSSDDEPSKSTVAASG. Residues 63–86 show a composition bias toward basic and acidic residues; sequence RDPEDRPPFDYRDYSRSSSDDEPS. N-linked (GlcNAc...) asparagine glycosylation is present at asparagine 102. A BURP domain is found at 142 to 356; that stretch reads FFHEEAVRVG…PYGHIIWAKN (215 aa).

As to expression, specifically expressed in anthers, in the tapetum and microspores (at protein level).

Its function is as follows. Required for pollen development. Probably synthesized in the tapetum, packaged in Ubisch bodies and transported at appropriate stages to the micropsores. The sequence is that of Protein RAFTIN 1B (RAFTIN1B) from Triticum aestivum (Wheat).